Consider the following 310-residue polypeptide: Putative S-adenosyl-L-methionine-dependent methyltransferase MAP_2076c (310 aa).

Residues D131 and 160 to 161 each bind S-adenosyl-L-methionine; that span reads DL.

This sequence belongs to the UPF0677 family.

Exhibits S-adenosyl-L-methionine-dependent methyltransferase activity. The protein is Putative S-adenosyl-L-methionine-dependent methyltransferase MAP_2076c of Mycolicibacterium paratuberculosis (strain ATCC BAA-968 / K-10) (Mycobacterium paratuberculosis).